A 120-amino-acid chain; its full sequence is Large ribosomal subunit protein uL18 (120 aa).

The tract at residues 1–26 (MSKAKVTNARRKRSVRLKLRRSGGGR) is disordered. Residues 8–23 (NARRKRSVRLKLRRSG) are compositionally biased toward basic residues.

Belongs to the universal ribosomal protein uL18 family. In terms of assembly, part of the 50S ribosomal subunit; part of the 5S rRNA/L5/L18/L25 subcomplex. Contacts the 5S and 23S rRNAs.

Its function is as follows. This is one of the proteins that bind and probably mediate the attachment of the 5S RNA into the large ribosomal subunit, where it forms part of the central protuberance. The chain is Large ribosomal subunit protein uL18 from Bradyrhizobium diazoefficiens (strain JCM 10833 / BCRC 13528 / IAM 13628 / NBRC 14792 / USDA 110).